The primary structure comprises 730 residues: UvrABC system protein C (730 aa).

A GIY-YIG domain is found at 16-95 (AAPGVYKFRD…IKEFDPRFNV (80 aa)). One can recognise a UVR domain in the interval 208 to 243 (DKLVKDLEKRMQQASEDLDFETAARLRDDIGALRKA). The tract at residues 678-730 (ARALPAAVGDDELDKESESSVTSADAPSAESGSGDEGSESRELSMPTTGPSAQ) is disordered.

Belongs to the UvrC family. As to quaternary structure, interacts with UvrB in an incision complex.

Its subcellular location is the cytoplasm. The UvrABC repair system catalyzes the recognition and processing of DNA lesions. UvrC both incises the 5' and 3' sides of the lesion. The N-terminal half is responsible for the 3' incision and the C-terminal half is responsible for the 5' incision. The chain is UvrABC system protein C from Rhodococcus erythropolis (strain PR4 / NBRC 100887).